Consider the following 445-residue polypeptide: Putative U-box domain-containing protein 47 (445 aa).

The 74-residue stretch at Glu-64–Asp-137 folds into the U-box domain.

The enzyme catalyses S-ubiquitinyl-[E2 ubiquitin-conjugating enzyme]-L-cysteine + [acceptor protein]-L-lysine = [E2 ubiquitin-conjugating enzyme]-L-cysteine + N(6)-ubiquitinyl-[acceptor protein]-L-lysine.. The protein operates within protein modification; protein ubiquitination. Functionally, functions as an E3 ubiquitin ligase. The chain is Putative U-box domain-containing protein 47 (PUB47) from Arabidopsis thaliana (Mouse-ear cress).